We begin with the raw amino-acid sequence, 623 residues long: Chaperone protein HtpG (623 aa).

An a; substrate-binding region spans residues 1-341; that stretch reads MEKREFKAES…SQDLSLNISR (341 aa). Positions 342-549 are b; sequence EMLQHDRQLS…EGEVSIEMEK (208 aa). The segment at 550 to 623 is c; it reads ILSAMPNNQG…FTNDICKLMK (74 aa).

The protein belongs to the heat shock protein 90 family. In terms of assembly, homodimer.

It localises to the cytoplasm. Molecular chaperone. Has ATPase activity. The chain is Chaperone protein HtpG from Clostridium perfringens (strain 13 / Type A).